We begin with the raw amino-acid sequence, 456 residues long: Toxin CfTX-1 (456 aa).

Residues 1 to 20 (MVKMLFFAFLPLLFMTGIAA) form the signal peptide.

It belongs to the jellyfish toxin family. Type I subfamily. Oligomer. Post-translationally, contains disulfide bonds. In terms of tissue distribution, nematocytes.

It is found in the secreted. It localises to the nematocyst. The protein resides in the target cell membrane. Functionally, may cause profound effects on the cardiovascular system of anesthetized rats (at 25 ug/kg), since the fraction containing this toxin and CfTX-2 produces an initial increase in mean arterial pressure, followed by cardiovascular collapse in all animals within 1 minute of injection. To note, the same fraction does not induce significant change in heart rate. Has weak hemolytic activity. Is lethal to crayfish. Causes cutaneous inflammation in humans. May act as a pore-forming toxin, disrupting normal transmembrane ion concentration gradients in susceptible cells. This is Toxin CfTX-1 from Chironex fleckeri (Australian box jellyfish).